A 468-amino-acid polypeptide reads, in one-letter code: Argininosuccinate lyase (468 aa).

Belongs to the lyase 1 family. Argininosuccinate lyase subfamily.

It localises to the cytoplasm. It catalyses the reaction 2-(N(omega)-L-arginino)succinate = fumarate + L-arginine. It participates in amino-acid biosynthesis; L-arginine biosynthesis; L-arginine from L-ornithine and carbamoyl phosphate: step 3/3. In Alkalilimnicola ehrlichii (strain ATCC BAA-1101 / DSM 17681 / MLHE-1), this protein is Argininosuccinate lyase.